Consider the following 399-residue polypeptide: Argininosuccinate synthase (399 aa).

Residue 8–16 (AYSGGLDTS) coordinates ATP. Tyr87 is a binding site for L-citrulline. Gly117 contacts ATP. 3 residues coordinate L-aspartate: Thr119, Asn123, and Asp124. Asn123 contacts L-citrulline. 4 residues coordinate L-citrulline: Arg127, Ser175, Glu260, and Tyr272.

The protein belongs to the argininosuccinate synthase family. Type 1 subfamily. Homotetramer.

It is found in the cytoplasm. It carries out the reaction L-citrulline + L-aspartate + ATP = 2-(N(omega)-L-arginino)succinate + AMP + diphosphate + H(+). It functions in the pathway amino-acid biosynthesis; L-arginine biosynthesis; L-arginine from L-ornithine and carbamoyl phosphate: step 2/3. The chain is Argininosuccinate synthase from Rhodococcus jostii (strain RHA1).